The following is a 117-amino-acid chain: Large ribosomal subunit protein uL22 (117 aa).

Belongs to the universal ribosomal protein uL22 family. Part of the 50S ribosomal subunit.

In terms of biological role, this protein binds specifically to 23S rRNA; its binding is stimulated by other ribosomal proteins, e.g. L4, L17, and L20. It is important during the early stages of 50S assembly. It makes multiple contacts with different domains of the 23S rRNA in the assembled 50S subunit and ribosome. Functionally, the globular domain of the protein is located near the polypeptide exit tunnel on the outside of the subunit, while an extended beta-hairpin is found that lines the wall of the exit tunnel in the center of the 70S ribosome. This is Large ribosomal subunit protein uL22 from Synechococcus elongatus (strain ATCC 33912 / PCC 7942 / FACHB-805) (Anacystis nidulans R2).